The primary structure comprises 328 residues: Ribosomal RNA small subunit methyltransferase H (328 aa).

Residues 37 to 39 (GGH), Asp-57, Phe-83, Asp-104, and Gln-111 each bind S-adenosyl-L-methionine.

It belongs to the methyltransferase superfamily. RsmH family.

It localises to the cytoplasm. It catalyses the reaction cytidine(1402) in 16S rRNA + S-adenosyl-L-methionine = N(4)-methylcytidine(1402) in 16S rRNA + S-adenosyl-L-homocysteine + H(+). Functionally, specifically methylates the N4 position of cytidine in position 1402 (C1402) of 16S rRNA. The sequence is that of Ribosomal RNA small subunit methyltransferase H from Neisseria meningitidis serogroup A / serotype 4A (strain DSM 15465 / Z2491).